The primary structure comprises 148 residues: Hemoglobin subunit beta (148 aa).

The 146-residue stretch at 3 to 148 folds into the Globin domain; sequence XWTDXERHVI…AVAALGKQYH (146 aa). Heme b is bound by residues His-64 and His-93.

The protein belongs to the globin family. As to quaternary structure, heterotetramer of two alpha chains and two beta chains. In terms of tissue distribution, red blood cells.

Its function is as follows. Involved in oxygen transport from gills to the various peripheral tissues. The chain is Hemoglobin subunit beta (hbb) from Silurus asotus (Amur catfish).